We begin with the raw amino-acid sequence, 135 residues long: Large ribosomal subunit protein uL16c (135 aa).

This sequence belongs to the universal ribosomal protein uL16 family. Part of the 50S ribosomal subunit.

It localises to the plastid. The protein localises to the chloroplast. The chain is Large ribosomal subunit protein uL16c from Phaseolus vulgaris (Kidney bean).